Consider the following 218-residue polypeptide: MSKNNENIKHQNNDKVNNQVDKKETKNHNKQEFKYKELYEHELKKNKELQNINTLLKDKNQQLEEQISQLNQDFIKQLETKAKQAQQILEQKVNELEARHEAKVNDAVFKIFKFKMEPLLDAINHFTKIVNQNYDDPKIQAFIEGFKMFSQNMIDGLDNLKITKISPQVNDSLNDEIMEVFEVVENTNKPSMHVVEVISDGFKYNDKVIKFAVVKVAK.

Basic and acidic residues-rich tracts occupy residues Met1 to Asn13 and Val20 to Glu32. The tract at residues Met1–Glu32 is disordered.

Belongs to the GrpE family. In terms of assembly, homodimer.

It is found in the cytoplasm. Its function is as follows. Participates actively in the response to hyperosmotic and heat shock by preventing the aggregation of stress-denatured proteins, in association with DnaK and GrpE. It is the nucleotide exchange factor for DnaK and may function as a thermosensor. Unfolded proteins bind initially to DnaJ; upon interaction with the DnaJ-bound protein, DnaK hydrolyzes its bound ATP, resulting in the formation of a stable complex. GrpE releases ADP from DnaK; ATP binding to DnaK triggers the release of the substrate protein, thus completing the reaction cycle. Several rounds of ATP-dependent interactions between DnaJ, DnaK and GrpE are required for fully efficient folding. This chain is Protein GrpE, found in Ureaplasma parvum serovar 3 (strain ATCC 27815 / 27 / NCTC 11736).